A 251-amino-acid polypeptide reads, in one-letter code: uncharacterized protein (251 aa).

This sequence to M.jannaschii MJ1311.

This is an uncharacterized protein from Methanocaldococcus jannaschii (strain ATCC 43067 / DSM 2661 / JAL-1 / JCM 10045 / NBRC 100440) (Methanococcus jannaschii).